The sequence spans 333 residues: tRNA-dihydrouridine(16) synthase (333 aa).

Residues 19–21 (PMQ) and Gln-80 each bind FMN. Residue Cys-110 is the Proton donor of the active site. FMN contacts are provided by residues Lys-151, 211–213 (NGD), and 235–236 (GR).

This sequence belongs to the Dus family. DusC subfamily. FMN serves as cofactor.

It carries out the reaction 5,6-dihydrouridine(16) in tRNA + NADP(+) = uridine(16) in tRNA + NADPH + H(+). The catalysed reaction is 5,6-dihydrouridine(16) in tRNA + NAD(+) = uridine(16) in tRNA + NADH + H(+). Its function is as follows. Catalyzes the synthesis of 5,6-dihydrouridine (D), a modified base found in the D-loop of most tRNAs, via the reduction of the C5-C6 double bond in target uridines. Specifically modifies U16 in tRNAs. The chain is tRNA-dihydrouridine(16) synthase from Neisseria meningitidis serogroup B (strain ATCC BAA-335 / MC58).